A 52-amino-acid chain; its full sequence is MIIAIAGSARMGVSQLHESLLDRITRKLRAGWKRLADILNQPGVPSHDYCAC.

It belongs to the lambda phage CIII protein family.

Presence of the CIII protein in the cell results in the stabilization of the CII transcriptional activator (a very unstable protein), CII activates CI, the gene for repressor, and thus promotes the establishment of lysogeny. This is Regulatory protein C3 (C3) from Salmonella typhimurium (Bacteriophage P22).